Reading from the N-terminus, the 345-residue chain is Opioid-binding protein/cell adhesion molecule (345 aa).

The signal sequence occupies residues 1–27 (MGVCGYLFLPWKCLVVVSLRLLFLVPT). Ig-like C2-type domains lie at 39–126 (PKAM…PKTS), 136–219 (PQIM…VKIT), and 223–310 (PPYI…ASIT). 3 N-linked (GlcNAc...) asparagine glycosylation sites follow: N44, N70, and N140. A disulfide bridge connects residues C57 and C115. Cystine bridges form between C157/C202 and C244/C296. N285, N293, and N306 each carry an N-linked (GlcNAc...) asparagine glycan. Residue N322 is the site of GPI-anchor amidated asparagine attachment. Residues 323-345 (SASRALACLWLSGTFFAHFFIKF) constitute a propeptide, removed in mature form.

This sequence belongs to the immunoglobulin superfamily. IgLON family.

The protein resides in the cell membrane. Its function is as follows. Binds opioids in the presence of acidic lipids; probably involved in cell contact. The sequence is that of Opioid-binding protein/cell adhesion molecule (Opcml) from Rattus norvegicus (Rat).